Reading from the N-terminus, the 323-residue chain is uncharacterized protein (323 aa).

The protein resides in the mitochondrion. This is an uncharacterized protein from Schizosaccharomyces pombe (strain 972 / ATCC 24843) (Fission yeast).